The following is a 1369-amino-acid chain: Microtubule-associated tumor suppressor candidate 2 (1369 aa).

Disordered regions lie at residues 180–262 (ASSS…TQTV), 374–442 (GRGN…FIPN), 477–509 (GENK…VAEN), 582–627 (NTSP…EERT), 791–839 (RSSA…LRPP), 861–992 (SSVS…QARE), and 1331–1369 (WKLQ…TTPR). 2 stretches are compositionally biased toward polar residues: residues 246–262 (PSTS…TQTV) and 392–401 (LHTTPKQGSA). Residues 641-980 (RPKIITYIRR…PKQRTAAARN (340 aa)) are mediates interaction with MAPRE1. A sufficient for interaction with KIF2C region spans residues 801 to 890 (GPITTATSLY…TRSTFGNEEQ (90 aa)). Residues 801–1150 (GPITTATSLY…HDAALLEMEN (350 aa)) are localization to the growing distal tip of microtubules. A compositionally biased stretch (polar residues) spans 804–814 (TTATSLYSSDP). The segment covering 821–834 (ASSSNAAKSNLPKS) has biased composition (low complexity). The span at 937-947 (TKKDAQKDQDT) shows a compositional bias: basic and acidic residues. Residues 991–1335 (REAERQLVLR…NEELLWKLQT (345 aa)) adopt a coiled-coil conformation. Residues 1348–1369 (SPVYRGSSSGPSSPARVSTTPR) show a composition bias toward low complexity.

This sequence in the C-terminal section; belongs to the MTUS1 family. As to quaternary structure, homodimer. Interacts with KIF2C and MAPRE1; the interaction is direct and probably targets MTUS2 and KIF2C to microtubules. As to expression, detected in embryonic stem cells differentiating to cardiomyocytes.

It localises to the cytoplasm. The protein resides in the cytoskeleton. In terms of biological role, binds microtubules. Together with MAPRE1 may target the microtubule depolymerase KIF2C to the plus-end of microtubules. May regulate the dynamics of microtubules at their growing distal tip. This Homo sapiens (Human) protein is Microtubule-associated tumor suppressor candidate 2 (MTUS2).